The primary structure comprises 769 residues: MRTVWSPLAAALAALGMSTYKRATLDEEDLVDSLSEGDVYPNGLQVNFRSSRSGQRCWAARTSVEKRLVVLVTLLAAGLVACLAALGIQYQTRTPPVCLTEACVSVTSSILNSMDPTVDPCQDFFSYACGGWIKANPVPDGHSRWGTFSNLWEHNQAVIKHLLENATASVSEAERKAQVYYRACMNETRIEELRAKPLMELIEKLGGWNITGPWAKDNFQDTLQVVTAHYRTSPFFSVYVSADSKNSNSNVIQVDQSGLGLPSRDYYLNKTENEKVLTGYLNYMVQLGKLLGGGDEDAIRPQMQQILDFETALANITIPQEKRRDEELIYHKVTAAELQTLAPAINWLPFLNTIFYPVEINESEPIVVYDKEYLRQVSTLINNTDKCLLNNYMMWNLVRKTSSFLDQRFQDADEKFMEVMYGTKKTCIPRWKFCVSDTENNLGFALGPMFVKATFAEDSKNIASEIIMEIKKAFEESLSTLKWMDEETRRSAKEKADAIYNMIGYPNFIMDPKELDKVFNDYTAVPDLYFENAMRFFNFSWRVTADQLRKAPNRDQWSMTPPMVNAYYSPTKNEIVFPAGILQAPFYTRSSPNALNFGGIGVVVGHELTHAFDDQGREYDKDGNLRPWWKNSSVEAFKQQTECMVQQYSNYSVNGEPVNGRHTLGENIADNGGLKAAYRAYQNWVKKNGAEQTLPTLGLTSNQLFFLGFAQVWCSVRTPESSHEGLITDPHSPSRFRVIGSLSNSKEFSEHFRCPPGSPMNPHHKCEVW.

At 1–67 (MRTVWSPLAA…WAARTSVEKR (67 aa)) the chain is on the cytoplasmic side. Position 24 is a phosphothreonine (T24). Residues 68–88 (LVVLVTLLAAGLVACLAALGI) form a helical; Signal-anchor for type II membrane protein membrane-spanning segment. The Extracellular portion of the chain corresponds to 89–769 (QYQTRTPPVC…MNPHHKCEVW (681 aa)). The Peptidase M13 domain occupies 97–769 (VCLTEACVSV…MNPHHKCEVW (673 aa)). 5 cysteine pairs are disulfide-bonded: C98/C103, C121/C754, C129/C714, C184/C434, and C643/C766. N-linked (GlcNAc...) asparagine glycans are attached at residues N165, N186, N209, N269, N315, N361, N382, and N538. H606 contributes to the Zn(2+) binding site. E607 is an active-site residue. H610 serves as a coordination point for Zn(2+). N-linked (GlcNAc...) asparagine glycosylation is found at N631 and N650. E666 lines the Zn(2+) pocket. Residue D670 is the Proton donor of the active site.

It belongs to the peptidase M13 family. Homodimer; disulfide-linked. Interacts with PPP1R16B. Interacts with TSPAN8; this interaction recruits the endothelin converting enzyme ECE1 to tetraspanin-enriched microdomains and positively modulates its enzymatic activity. It depends on Zn(2+) as a cofactor.

The protein resides in the cell membrane. The catalysed reaction is Hydrolysis of the 21-Trp-|-Val-22 bond in big endothelin to form endothelin 1.. Its activity is regulated as follows. Inhibited by phosphoramidon. Functionally, converts big endothelin-1 to endothelin-1. This chain is Endothelin-converting enzyme 1 (Ece1), found in Mus musculus (Mouse).